Here is a 434-residue protein sequence, read N- to C-terminus: Enolase (434 aa).

Gln-165 is a binding site for (2R)-2-phosphoglycerate. Catalysis depends on Glu-207, which acts as the Proton donor. 3 residues coordinate Mg(2+): Asp-244, Glu-291, and Asp-318. (2R)-2-phosphoglycerate is bound by residues Lys-343, Arg-372, Ser-373, and Lys-394. The active-site Proton acceptor is the Lys-343.

This sequence belongs to the enolase family. Requires Mg(2+) as cofactor.

The protein localises to the cytoplasm. It is found in the secreted. It localises to the cell surface. It carries out the reaction (2R)-2-phosphoglycerate = phosphoenolpyruvate + H2O. The protein operates within carbohydrate degradation; glycolysis; pyruvate from D-glyceraldehyde 3-phosphate: step 4/5. Its function is as follows. Catalyzes the reversible conversion of 2-phosphoglycerate (2-PG) into phosphoenolpyruvate (PEP). It is essential for the degradation of carbohydrates via glycolysis. The protein is Enolase of Staphylococcus haemolyticus (strain JCSC1435).